Here is a 500-residue protein sequence, read N- to C-terminus: Cytochrome P450 71B38 (500 aa).

The helical transmembrane segment at 3 to 23 (IFLCFLLLLPLSLILFKKLLP) threads the bilayer. Cys441 lines the heme pocket.

Belongs to the cytochrome P450 family. It depends on heme as a cofactor.

The protein resides in the membrane. The protein is Cytochrome P450 71B38 (CYP71B38) of Arabidopsis thaliana (Mouse-ear cress).